A 508-amino-acid chain; its full sequence is 4-trimethylaminobutyraldehyde dehydrogenase A (508 aa).

Residues Lys-194 and 246-250 (GSVPT) contribute to the NAD(+) site. The active-site Proton acceptor is Glu-268. The active-site Nucleophile is Cys-302. NAD(+) is bound at residue Glu-405.

It belongs to the aldehyde dehydrogenase family. As to quaternary structure, homotetramer.

The protein resides in the cytoplasm. It localises to the cytosol. It catalyses the reaction 4-(trimethylamino)butanal + NAD(+) + H2O = 4-(trimethylamino)butanoate + NADH + 2 H(+). The enzyme catalyses an aldehyde + NAD(+) + H2O = a carboxylate + NADH + 2 H(+). The protein operates within amine and polyamine biosynthesis; carnitine biosynthesis. In terms of biological role, converts gamma-trimethylaminobutyraldehyde into gamma-butyrobetaine with high efficiency (in vitro). Can catalyze the irreversible oxidation of a broad range of aldehydes to the corresponding acids in an NAD-dependent reaction, but with low efficiency. This is 4-trimethylaminobutyraldehyde dehydrogenase A (aldh9a1a) from Danio rerio (Zebrafish).